Reading from the N-terminus, the 152-residue chain is Protein CHLOROPLAST VESICULATION (152 aa).

Residues 1–22 (MAGRISCCLNLPPLDSNSAQSL) constitute a chloroplast transit peptide. The chain crosses the membrane as a helical span at residues 48 to 65 (CSFVLGVAATVVIGGIQI). The segment at 92–152 (RWSDKRTCPP…RVNRGGCFSV (61 aa)) is important for chloroplast destabilization and the formation of CV-containing vesicles.

As to quaternary structure, interacts with the photosystem II subunit PsbO1 via its C-terminal region in the chloroplast thylakoid membrane and in CV-containing vesicles (CCVs). As to expression, mostly expressed in senescent and mature leaves but not in young leaves.

It is found in the plastid. The protein resides in the chloroplast membrane. The protein localises to the chloroplast thylakoid membrane. Its subcellular location is the chloroplast envelope. It localises to the vacuole. It is found in the vesicle. Its function is as follows. Triggers stress-induced chloroplast degradation, independently of autophagy and senescence-associated vacuoles. After targeting to the chloroplast, triggers its destabilization and subsequent disassembly, inducing the formation of CV-containing vesicles (CCVs) carrying stromal proteins, envelope membrane proteins, and thylakoid membrane proteins which are released from the chloroplasts and mobilized to the vacuole for proteolysis. The polypeptide is Protein CHLOROPLAST VESICULATION (Arabidopsis thaliana (Mouse-ear cress)).